Here is a 369-residue protein sequence, read N- to C-terminus: Core histone macro-H2A.1 (369 aa).

A Histone H2A domain is found at 2–117 (SSRGGKKKST…NIHPELLAKK (116 aa)). Lysine 7 and lysine 9 each carry N6-lactoyllysine; alternate. The residue at position 18 (lysine 18) is an N6-methyllysine. Residue lysine 116 is modified to N6-acetyllysine; alternate. Lysine 116 participates in a covalent cross-link: Glycyl lysine isopeptide (Lys-Gly) (interchain with G-Cter in ubiquitin); alternate. Lysine 117 participates in a covalent cross-link: Glycyl lysine isopeptide (Lys-Gly) (interchain with G-Cter in ubiquitin). N6-acetyllysine; alternate is present on lysine 123. Lysine 123 bears the N6,N6-dimethyllysine; alternate mark. Residue lysine 123 forms a Glycyl lysine isopeptide (Lys-Gly) (interchain with G-Cter in SUMO2); alternate linkage. A disordered region spans residues 128–180 (ITPPPAKKAKSPSQKKPVSKKAGGKKGARKSKKKQGEVSKAASADSTTEGTPA). Threonine 129 carries the phosphothreonine modification. Positions 144–160 (PVSKKAGGKKGARKSKK) are enriched in basic residues. Lysine 167 participates in a covalent cross-link: Glycyl lysine isopeptide (Lys-Gly) (interchain with G-Cter in SUMO2). 2 positions are modified to phosphoserine: serine 170 and serine 173. Phosphothreonine is present on threonine 178. One can recognise a Macro domain in the interval 184–367 (TVLSTKSLFL…IYVQEMAKLD (184 aa)). Lysine 189 participates in a covalent cross-link: Glycyl lysine isopeptide (Lys-Gly) (interchain with G-Cter in SUMO2). 8 residues coordinate a glycoprotein: aspartate 203, isoleucine 204, valine 226, serine 275, glycine 312, serine 313, glycine 314, and asparagine 316. Residue lysine 320 forms a Glycyl lysine isopeptide (Lys-Gly) (interchain with G-Cter in SUMO2) linkage.

It belongs to the histone H2A family. As to quaternary structure, the nucleosome is a histone octamer containing two molecules each of H2A, H2B, H3 and H4 assembled in one H3-H4 heterotetramer and two H2A-H2B heterodimers. Interacts with HDAC1 and HDAC2. Interacts with SPOP. Part of a complex consisting of MACROH2A1, CUL3 and SPOP. In terms of assembly, interacts with PARP1. Monoubiquitinated at either Lys-116 or Lys-117. May also be polyubiquitinated. Ubiquitination is mediated by the CUL3/SPOP E3 complex and does not promote proteasomal degradation. Instead, it is required for enrichment in inactive X chromosome chromatin. In terms of tissue distribution, widely expressed.

It is found in the nucleus. The protein localises to the chromosome. In terms of biological role, variant histone H2A which replaces conventional H2A in a subset of nucleosomes where it represses transcription. Nucleosomes wrap and compact DNA into chromatin, limiting DNA accessibility to the cellular machineries which require DNA as a template. Histones thereby play a central role in transcription regulation, DNA repair, DNA replication and chromosomal stability. DNA accessibility is regulated via a complex set of post-translational modifications of histones, also called histone code, and nucleosome remodeling. Involved in stable X chromosome inactivation. Inhibits the binding of transcription factors, including NF-kappa-B, and interferes with the activity of remodeling SWI/SNF complexes. Inhibits histone acetylation by EP300 and recruits class I HDACs, which induces a hypoacetylated state of chromatin. Its function is as follows. Isoform that specifically binds poly-ADP-ribose and O-acetyl-ADP-ribose and plays a key role in NAD(+) metabolism. Able to bind to the ends of poly-ADP-ribose chains created by PARP1 and cap them. This prevents PARP1 from further addition of ADP-ribose and thus limits the consumption of nuclear NAD(+), allowing the cell to maintain proper NAD(+) levels in both the nucleus and the mitochondria to promote proper mitochondrial respiration. Increases the expression of genes involved in redox metabolism, including SOD3. In contrast to isoform 1, does not bind poly-ADP-ribose. Represses SOD3 gene expression. This is Core histone macro-H2A.1 from Homo sapiens (Human).